The following is a 581-amino-acid chain: MQRDEERPIDFGMSLELPKTPNDVNYVKKLITQILYLQTLVSEQQKKIESSTLEVQKKKDQIRELERIYEMNPKSFLTLRRTPALKLLPETLSVELSNEVNLTSSTTSSCVKPSPYLTNCNLKNKDTFPVSKNNCSLSSGIFTNSNGTNNCFSTHPKSLDDAKDNVVPKKLNDTDQFPLWSKNETIDPIDLGYSFISPFSMSFASKGNEILDPGESTNKNLFYEFPNGTTEPFEKNSVHSGKETLQYSATISKWKAMIEQIIFQNDQAASLSLQQQLKNEDIEDNINLINTILPFSVTLMKNKFGNFLIQKCFEYSTEAQLQSFSYFLKKHVKELSIDAFGSHVLQKSLEIYPERFTNNLIEELIECLPATLMQRHSCHVWQKFFETRRKSLVDGIFDHFNKKMQGKWLQVSVSEMGSLVVQTIFENCKEKDKRTCLDEIINNMDQIICGQWGNWVIQHIIEHGSEPDKQRILNSLLKEVESYSTNRYASKVVERALRVCHVTFFDRYVKEITTPQNELPTIFLQEIASNQYGNYIVQYLLQVATPSQINLMAEHLKKHMVSLRGHKYGQRIAALVEKSKS.

In terms of domain architecture, PUM-HD spans 225–580 (FPNGTTEPFE…RIAALVEKSK (356 aa)). Pumilio repeat units lie at residues 291-326 (TILP…SFSY), 327-362 (FLKK…NLIE), 363-398 (ELIE…GIFD), 403-438 (KMQG…TCLD), 439-474 (EIIN…RILN), 475-510 (SLLK…RYVK), 518-554 (ELPT…LMAE), and 555-581 (HLKK…KSKS).

RNA-binding protein essential for meiotic progression. The chain is Meiotic PUF family protein 1 (mpf1) from Schizosaccharomyces pombe (strain 972 / ATCC 24843) (Fission yeast).